A 257-amino-acid chain; its full sequence is Imidazole glycerol phosphate synthase subunit HisF (257 aa).

Active-site residues include aspartate 12 and aspartate 131.

Belongs to the HisA/HisF family. As to quaternary structure, heterodimer of HisH and HisF.

Its subcellular location is the cytoplasm. It catalyses the reaction 5-[(5-phospho-1-deoxy-D-ribulos-1-ylimino)methylamino]-1-(5-phospho-beta-D-ribosyl)imidazole-4-carboxamide + L-glutamine = D-erythro-1-(imidazol-4-yl)glycerol 3-phosphate + 5-amino-1-(5-phospho-beta-D-ribosyl)imidazole-4-carboxamide + L-glutamate + H(+). Its pathway is amino-acid biosynthesis; L-histidine biosynthesis; L-histidine from 5-phospho-alpha-D-ribose 1-diphosphate: step 5/9. Its function is as follows. IGPS catalyzes the conversion of PRFAR and glutamine to IGP, AICAR and glutamate. The HisF subunit catalyzes the cyclization activity that produces IGP and AICAR from PRFAR using the ammonia provided by the HisH subunit. This chain is Imidazole glycerol phosphate synthase subunit HisF, found in Saccharophagus degradans (strain 2-40 / ATCC 43961 / DSM 17024).